We begin with the raw amino-acid sequence, 335 residues long: Ketol-acid reductoisomerase (NADP(+)) 2 (335 aa).

In terms of domain architecture, KARI N-terminal Rossmann spans 1–180 (MKTYYEKDAN…GCTRAGVIET (180 aa)). NADP(+)-binding positions include 24-27 (YGSQ), arginine 47, serine 51, and 81-84 (DEQQ). The active site involves histidine 106. Glycine 132 contributes to the NADP(+) binding site. The 146-residue stretch at 181–326 (TFQEETETDL…AELREMMSWI (146 aa)) folds into the KARI C-terminal knotted domain. Aspartate 189, glutamate 193, glutamate 225, and glutamate 229 together coordinate Mg(2+). Serine 250 is a substrate binding site.

This sequence belongs to the ketol-acid reductoisomerase family. It depends on Mg(2+) as a cofactor.

It catalyses the reaction (2R)-2,3-dihydroxy-3-methylbutanoate + NADP(+) = (2S)-2-acetolactate + NADPH + H(+). It carries out the reaction (2R,3R)-2,3-dihydroxy-3-methylpentanoate + NADP(+) = (S)-2-ethyl-2-hydroxy-3-oxobutanoate + NADPH + H(+). Its pathway is amino-acid biosynthesis; L-isoleucine biosynthesis; L-isoleucine from 2-oxobutanoate: step 2/4. The protein operates within amino-acid biosynthesis; L-valine biosynthesis; L-valine from pyruvate: step 2/4. In terms of biological role, involved in the biosynthesis of branched-chain amino acids (BCAA). Catalyzes an alkyl-migration followed by a ketol-acid reduction of (S)-2-acetolactate (S2AL) to yield (R)-2,3-dihydroxy-isovalerate. In the isomerase reaction, S2AL is rearranged via a Mg-dependent methyl migration to produce 3-hydroxy-3-methyl-2-ketobutyrate (HMKB). In the reductase reaction, this 2-ketoacid undergoes a metal-dependent reduction by NADPH to yield (R)-2,3-dihydroxy-isovalerate. In Bacillus cereus (strain ZK / E33L), this protein is Ketol-acid reductoisomerase (NADP(+)) 2.